The sequence spans 325 residues: Peroxidase 47 (325 aa).

An N-terminal signal peptide occupies residues 1 to 36; it reads MLTRFKKQNNKMVRANIVSMVLLMHAIVGFPFHARG. Disulfide bonds link C46–C125, C79–C84, C131–C321, and C209–C235. Residue H77 is the Proton acceptor of the active site. Ca(2+) is bound by residues D78, G83, D85, and S87. Residue P172 coordinates substrate. N-linked (GlcNAc...) asparagine glycosylation is present at N177. H202 is a binding site for heme b. T203 serves as a coordination point for Ca(2+). 3 residues coordinate Ca(2+): D246, T248, and D253.

It belongs to the peroxidase family. Classical plant (class III) peroxidase subfamily. The cofactor is heme b. Ca(2+) is required as a cofactor.

It localises to the secreted. It carries out the reaction 2 a phenolic donor + H2O2 = 2 a phenolic radical donor + 2 H2O. Its function is as follows. Removal of H(2)O(2), oxidation of toxic reductants, biosynthesis and degradation of lignin, suberization, auxin catabolism, response to environmental stresses such as wounding, pathogen attack and oxidative stress. These functions might be dependent on each isozyme/isoform in each plant tissue. This Arabidopsis thaliana (Mouse-ear cress) protein is Peroxidase 47 (PER47).